The sequence spans 60 residues: Putative per-hexamer repeat protein 1 (60 aa).

This chain is Putative per-hexamer repeat protein 1 (Phxr1), found in Mus musculus (Mouse).